The sequence spans 207 residues: Cytidylate kinase (207 aa).

Residue 7-15 (GVAASGKSS) participates in ATP binding.

Belongs to the cytidylate kinase family. Type 1 subfamily.

Its subcellular location is the cytoplasm. It carries out the reaction CMP + ATP = CDP + ADP. It catalyses the reaction dCMP + ATP = dCDP + ADP. The chain is Cytidylate kinase from Deinococcus deserti (strain DSM 17065 / CIP 109153 / LMG 22923 / VCD115).